A 599-amino-acid chain; its full sequence is Elongation factor 4 (599 aa).

Residues 2-184 (KNIRNFSIIA…RLVRDIPPPE (183 aa)) enclose the tr-type G domain. GTP-binding positions include 14 to 19 (DHGKST) and 131 to 134 (NKID).

Belongs to the TRAFAC class translation factor GTPase superfamily. Classic translation factor GTPase family. LepA subfamily.

Its subcellular location is the cell inner membrane. The catalysed reaction is GTP + H2O = GDP + phosphate + H(+). In terms of biological role, required for accurate and efficient protein synthesis under certain stress conditions. May act as a fidelity factor of the translation reaction, by catalyzing a one-codon backward translocation of tRNAs on improperly translocated ribosomes. Back-translocation proceeds from a post-translocation (POST) complex to a pre-translocation (PRE) complex, thus giving elongation factor G a second chance to translocate the tRNAs correctly. Binds to ribosomes in a GTP-dependent manner. The chain is Elongation factor 4 from Escherichia fergusonii (strain ATCC 35469 / DSM 13698 / CCUG 18766 / IAM 14443 / JCM 21226 / LMG 7866 / NBRC 102419 / NCTC 12128 / CDC 0568-73).